The chain runs to 407 residues: Cytochrome P450 NovI (407 aa).

Cysteine 357 lines the heme pocket.

Belongs to the cytochrome P450 family. It depends on heme as a cofactor.

Its pathway is antibiotic biosynthesis; novobiocin biosynthesis. Together with NovH, involved in the formation of a beta-OH-Tyr intermediate in the novobiocin biosynthesis pathway, an aminocoumarin family antibiotic that targets bacterial DNA gyrases. Acts as a cytochrome P450-type monooxygenase with specificity for the tyrosyl-S-NovH acyl enzyme (L-Tyr-S-NovH) to form the beta-OH-Tyr intermediate (L-beta-OH-Tyr-S-NovH). The chain is Cytochrome P450 NovI (novI) from Streptomyces niveus (Streptomyces spheroides).